A 244-amino-acid polypeptide reads, in one-letter code: uncharacterized protein (244 aa).

Positions 1–127 (MSGPQGSDPR…YPGQYGPYGQ (127 aa)) are disordered. The segment covering 34–43 (WQQQPTQEAT) has biased composition (polar residues). 2 stretches are compositionally biased toward low complexity: residues 45–75 (QAPAYTPQYQQPADPAYPQQYPQPTPGYAQP) and 88–127 (PGQYGQYQQPGQYGQPGQYGQPGQYAPPGQYPGQYGPYGQ). A helical transmembrane segment spans residues 136-156 (VAVIGGVIAVMAVLFIGAVLI).

It localises to the membrane. This is an uncharacterized protein from Mycobacterium tuberculosis (strain CDC 1551 / Oshkosh).